The chain runs to 352 residues: MKKILFIDRDGTLVEEPFDFQVDSLDKIKLTSGVIPALLQLQKAGFTFIMVSNQNGIGTVAFPEEDFAVCHEFILDLFSSQGILFDEIFICPHTPENNCICRKPKTGLLEPYLKETVFAKQYSWVIGDRDTDKEFADNLGVNFLPISKTHTWEMVASAIINDARKASVQRKTKETTIDLSVQLDSDQTSVIDTPIPFFTHMLEQVAKHGGFDLRLQASGDLEVDEHHLIEDTAIALGEAIRTALGDKWGINRYGYTLPMDESLATIAIDISGRSFCDFKGQFTREFIGGMATEMIPHFFQSLSSALGATIHIEVTGTNHHHMIEACFKVLGRALRQACSRTNNYLPSTKGVL.

The histidinol-phosphatase stretch occupies residues 1–163; that stretch reads MKKILFIDRD…MVASAIINDA (163 aa). Asp-8 serves as the catalytic Nucleophile. Residues Asp-8 and Asp-10 each contribute to the Mg(2+) site. The active-site Proton donor is Asp-10. Zn(2+) is bound by residues Cys-91, His-93, Cys-99, and Cys-101. Mg(2+) is bound at residue Asp-128. Residues 164–352 form an imidazoleglycerol-phosphate dehydratase region; it reads RKASVQRKTK…NYLPSTKGVL (189 aa).

This sequence in the N-terminal section; belongs to the histidinol-phosphatase family. In the C-terminal section; belongs to the imidazoleglycerol-phosphate dehydratase family. The cofactor is Mg(2+). It depends on Zn(2+) as a cofactor.

The protein localises to the cytoplasm. The enzyme catalyses D-erythro-1-(imidazol-4-yl)glycerol 3-phosphate = 3-(imidazol-4-yl)-2-oxopropyl phosphate + H2O. It carries out the reaction L-histidinol phosphate + H2O = L-histidinol + phosphate. It functions in the pathway amino-acid biosynthesis; L-histidine biosynthesis; L-histidine from 5-phospho-alpha-D-ribose 1-diphosphate: step 6/9. It participates in amino-acid biosynthesis; L-histidine biosynthesis; L-histidine from 5-phospho-alpha-D-ribose 1-diphosphate: step 8/9. This chain is Histidine biosynthesis bifunctional protein HisB, found in Legionella pneumophila subsp. pneumophila (strain Philadelphia 1 / ATCC 33152 / DSM 7513).